Reading from the N-terminus, the 458-residue chain is UDP-N-acetylmuramoylalanine--D-glutamate ligase (458 aa).

124–130 serves as a coordination point for ATP; the sequence is GSDGKTT.

Belongs to the MurCDEF family.

It is found in the cytoplasm. It carries out the reaction UDP-N-acetyl-alpha-D-muramoyl-L-alanine + D-glutamate + ATP = UDP-N-acetyl-alpha-D-muramoyl-L-alanyl-D-glutamate + ADP + phosphate + H(+). It functions in the pathway cell wall biogenesis; peptidoglycan biosynthesis. Functionally, cell wall formation. Catalyzes the addition of glutamate to the nucleotide precursor UDP-N-acetylmuramoyl-L-alanine (UMA). The sequence is that of UDP-N-acetylmuramoylalanine--D-glutamate ligase from Clostridium botulinum (strain Loch Maree / Type A3).